A 479-amino-acid chain; its full sequence is UDP-N-acetylmuramoylalanine--D-glutamate ligase (479 aa).

110 to 116 contacts ATP; it reads GTNGKTS.

It belongs to the MurCDEF family.

Its subcellular location is the cytoplasm. The catalysed reaction is UDP-N-acetyl-alpha-D-muramoyl-L-alanine + D-glutamate + ATP = UDP-N-acetyl-alpha-D-muramoyl-L-alanyl-D-glutamate + ADP + phosphate + H(+). It functions in the pathway cell wall biogenesis; peptidoglycan biosynthesis. Functionally, cell wall formation. Catalyzes the addition of glutamate to the nucleotide precursor UDP-N-acetylmuramoyl-L-alanine (UMA). The sequence is that of UDP-N-acetylmuramoylalanine--D-glutamate ligase from Bifidobacterium adolescentis (strain ATCC 15703 / DSM 20083 / NCTC 11814 / E194a).